Reading from the N-terminus, the 281-residue chain is Ribonuclease HII (281 aa).

A disordered region spans residues 1–46; it reads MIRDTKQPIKVPAKPASRSGGKAKTVKPKTIKPKTSAKAAAAKPAS. Positions 33-46 are enriched in low complexity; sequence PKTSAKAAAAKPAS. Residues 73 to 261 enclose the RNase H type-2 domain; it reads WPIAGCDEAG…VAAAWQKIEG (189 aa). A divalent metal cation contacts are provided by Asp79, Glu80, and Asp170.

The protein belongs to the RNase HII family. It depends on Mn(2+) as a cofactor. Mg(2+) serves as cofactor.

It is found in the cytoplasm. It carries out the reaction Endonucleolytic cleavage to 5'-phosphomonoester.. Endonuclease that specifically degrades the RNA of RNA-DNA hybrids. The sequence is that of Ribonuclease HII from Rhodopseudomonas palustris (strain TIE-1).